A 166-amino-acid chain; its full sequence is MVDHARARKMADRIKEIVARKLDRGIKDPRLGFVTVTDVRVTGDLQHASIFYTVYGTDEERADTAAALKSATGMLRSEVGKNITARLTPSLEFILDGVPENAAAIDALLEEARRRDADVQAQAKSGVYAGDEDPYVKPRVIGEDEDEDDEDGDDIDRSAPGYEPAH.

Residues Val-119–His-166 form a disordered region. A compositionally biased stretch (acidic residues) spans Glu-143–Asp-154.

The protein belongs to the RbfA family. In terms of assembly, monomer. Binds 30S ribosomal subunits, but not 50S ribosomal subunits or 70S ribosomes.

It is found in the cytoplasm. One of several proteins that assist in the late maturation steps of the functional core of the 30S ribosomal subunit. Associates with free 30S ribosomal subunits (but not with 30S subunits that are part of 70S ribosomes or polysomes). Required for efficient processing of 16S rRNA. May interact with the 5'-terminal helix region of 16S rRNA. The chain is Ribosome-binding factor A from Clavibacter michiganensis subsp. michiganensis (strain NCPPB 382).